A 284-amino-acid polypeptide reads, in one-letter code: Sulfotransferase 4A1 (284 aa).

Phosphothreonine occurs at positions 8, 11, and 205.

It belongs to the sulfotransferase 1 family. Highly expressed in the cerebral cortex and frontal lobe, slightly less in the cerebellum, occipital and temporal lobes, relatively low in the medulla and putamen, and lowest in the spinal cord. No expression detected in the pancreas. Highly expressed in fetal brain and occipital lobe, slightly less in the whole brain, frontal lobe, hippocampus, and lung, very low expression in cerebellum, medulla oblongata, temporal lobe, testis, kidney and appendix.

It localises to the cytoplasm. Atypical sulfotransferase family member with very low affinity for 3'-phospho-5'-adenylyl sulfate (PAPS) and very low catalytic activity towards L-triiodothyronine, thyroxine, estrone, p-nitrophenol, 2-naphthylamine, and 2-beta-naphthol. May have a role in the metabolism of drugs and neurotransmitters in the CNS. The sequence is that of Sulfotransferase 4A1 (SULT4A1) from Homo sapiens (Human).